The primary structure comprises 629 residues: Sushi domain-containing protein 5 (629 aa).

Positions 1–35 are cleaved as a signal peptide; sequence MTAEGPSPPARWHRRLPGLWAAALLLLGLPRLSVR. The Extracellular portion of the chain corresponds to 36 to 574; the sequence is ADGKFFVLES…DGCPGLSRGP (539 aa). The Link domain occupies 39–134; the sequence is KFFVLESQNG…GGTYSALCIK (96 aa). Intrachain disulfides connect Cys61–Cys132, Cys140–Cys184, and Cys167–Cys197. The region spanning 138–199 is the Sushi domain; the sequence is KPCGDPPSFP…WYGLVQACGK (62 aa). The segment covering 225-249 has biased composition (basic and acidic residues); it reads EDSRTEADEDRGQGDSSEEAPKQDR. 2 disordered regions span residues 225–252 and 344–403; these read EDSR…RLVS and DGPS…GLDE. The chain crosses the membrane as a helical span at residues 575 to 595; the sequence is VIATIVTVLCLLLLLAGVGMV. At 596 to 629 the chain is on the cytoplasmic side; it reads WGYRKCQHKSSVYKLNVGQRQARHYHQQIEMEKV.

It is found in the membrane. This is Sushi domain-containing protein 5 (SUSD5) from Homo sapiens (Human).